The primary structure comprises 187 residues: UPF0301 protein lpl0620 (187 aa).

This sequence belongs to the UPF0301 (AlgH) family.

The chain is UPF0301 protein lpl0620 from Legionella pneumophila (strain Lens).